The primary structure comprises 151 residues: UPF0178 protein CPS_3584 (151 aa).

The protein belongs to the UPF0178 family.

In Colwellia psychrerythraea (strain 34H / ATCC BAA-681) (Vibrio psychroerythus), this protein is UPF0178 protein CPS_3584.